Consider the following 287-residue polypeptide: MARSLAALLLLLVAAAGASHAASPAEMYWKIALPTSPMPGAIRDLISPASSAASASKDKEDTVGSVFFLEKDLFPGSKMTLHFTRATAGAALLPRGRADSVPFASEKLPEILSQLSIPAGSPTADAMRSTLAVCEAARIASETAPKHKHYCATSLESMVELVASSLGTRDVHAVSTEVVNRAGPTPRQAYRVEAVRPVPVPGGDMVACHRMPYAYAVFGVHGIKGAAYTVTLAGADGTMAEAVAACHGDVDGHGVAVAEAYKRLGVAPGKVAVCHFLPQDDMLWVRN.

The N-terminal stretch at 1 to 21 (MARSLAALLLLLVAAAGASHA) is a signal peptide. A BURP domain is found at 67 to 287 (FFLEKDLFPG…PQDDMLWVRN (221 aa)).

In terms of tissue distribution, expressed in shoot.

This Oryza sativa subsp. japonica (Rice) protein is BURP domain-containing protein 2 (BURP2).